The chain runs to 497 residues: Putative glucuronosyltransferase PGSIP8 (497 aa).

A helical transmembrane segment spans residues 3–23; the sequence is LQRGFVFLSLVLSFMIIETTA. Mn(2+)-binding residues include Asp-165 and Asp-167. 5 consecutive transmembrane segments (helical) span residues 319-339, 365-385, 388-408, 418-438, and 442-462; these read YSAEMPLVIIQAMFYLGIIVV, GFKLIALLSVVAAYIFPFFTI, TIHPLIGWSLYLMASFALSSI, LPVLTPWLGILGTLLVMAFPW, and GVVRALSVFAYAFCCAPFVWV.

This sequence belongs to the glycosyltransferase 8 family. Glycogenin subfamily. Mn(2+) is required as a cofactor.

The protein resides in the membrane. The sequence is that of Putative glucuronosyltransferase PGSIP8 (PGSIP8) from Arabidopsis thaliana (Mouse-ear cress).